Reading from the N-terminus, the 148-residue chain is SsrA-binding protein (148 aa).

A disordered region spans residues 124–148; sequence QFDKRETEKDRDWQREKARLMREKA.

Belongs to the SmpB family.

It is found in the cytoplasm. Its function is as follows. Required for rescue of stalled ribosomes mediated by trans-translation. Binds to transfer-messenger RNA (tmRNA), required for stable association of tmRNA with ribosomes. tmRNA and SmpB together mimic tRNA shape, replacing the anticodon stem-loop with SmpB. tmRNA is encoded by the ssrA gene; the 2 termini fold to resemble tRNA(Ala) and it encodes a 'tag peptide', a short internal open reading frame. During trans-translation Ala-aminoacylated tmRNA acts like a tRNA, entering the A-site of stalled ribosomes, displacing the stalled mRNA. The ribosome then switches to translate the ORF on the tmRNA; the nascent peptide is terminated with the 'tag peptide' encoded by the tmRNA and targeted for degradation. The ribosome is freed to recommence translation, which seems to be the essential function of trans-translation. This Ralstonia pickettii (strain 12J) protein is SsrA-binding protein.